We begin with the raw amino-acid sequence, 247 residues long: CDP-diacylglycerol pyrophosphatase (247 aa).

The chain crosses the membrane as a helical span at residues 5-22 (IVLALVVSVAVAGGWLWM).

It belongs to the Cdh family.

The protein localises to the cell inner membrane. The enzyme catalyses a CDP-1,2-diacyl-sn-glycerol + H2O = a 1,2-diacyl-sn-glycero-3-phosphate + CMP + 2 H(+). The protein operates within phospholipid metabolism; CDP-diacylglycerol degradation; phosphatidate from CDP-diacylglycerol: step 1/1. The sequence is that of CDP-diacylglycerol pyrophosphatase from Enterobacter sp. (strain 638).